The sequence spans 131 residues: MLYPALLCAALLLIAPLGHTEGRTLYPSPDAIQFVEQFLDRYNDLTLDDLENLVSSQPEEPSSAFTSGVKIAEYPKWADIPAQGDSTWLRLLKGTLANQKRAVTDRSRRGWNRGCFGLKLDRIGSMSGLGC.

A signal peptide spans 1–22 (MLYPALLCAALLLIAPLGHTEG). Residues 23–109 (RTLYPSPDAI…KRAVTDRSRR (87 aa)) constitute a propeptide that is removed on maturation. Cys-115 and Cys-131 are disulfide-bonded.

The protein belongs to the natriuretic peptide family. In terms of tissue distribution, expressed in brain and to a low extent in atrium.

It localises to the secreted. Functionally, exhibits natriuretic and vasodepressor activity. Has a cGMP-stimulating activity. This chain is C-type natriuretic peptide 2, found in Oncorhynchus mykiss (Rainbow trout).